Reading from the N-terminus, the 367-residue chain is Probable ATP-dependent RNA helicase MJ0669 (367 aa).

The Q motif signature appears at 6–34 (MNFNELNLSDNILNAIRNKGFEKPTDIQM). One can recognise a Helicase ATP-binding domain in the interval 38-206 (PLFLNDEYNI…KKYMGDYSFI (169 aa)). Residue 51 to 58 (ARTGSGKT) participates in ATP binding. The DEAD box motif lies at 154–157 (DEAD). Residues 213-367 (NIEQSYVEVN…KLKIKKLKFG (155 aa)) form the Helicase C-terminal domain.

The protein belongs to the DEAD box helicase family. In terms of assembly, homodimer.

It carries out the reaction ATP + H2O = ADP + phosphate + H(+). This Methanocaldococcus jannaschii (strain ATCC 43067 / DSM 2661 / JAL-1 / JCM 10045 / NBRC 100440) (Methanococcus jannaschii) protein is Probable ATP-dependent RNA helicase MJ0669.